Reading from the N-terminus, the 286-residue chain is Structural protein p32K (286 aa).

Residues 1-12 (MYVTNNTALAGG) constitute a propeptide, removed in mature form. The disordered stretch occupies residues 1-41 (MYVTNNTALAGGAYRKRKKKFQRPKPRKRARKSKKPPKSEN). The segment covering 14 to 36 (YRKRKKKFQRPKPRKRARKSKKP) has biased composition (basic residues).

Belongs to the atadenoviridae p32K protein family.

It is found in the virion. This Ovine adenovirus D serotype 7 (isolate OAV287) (OAdV-7) protein is Structural protein p32K.